We begin with the raw amino-acid sequence, 220 residues long: GTP cyclohydrolase 1 (220 aa).

Residues cysteine 109, histidine 112, and cysteine 180 each contribute to the Zn(2+) site.

This sequence belongs to the GTP cyclohydrolase I family. Toroid-shaped homodecamer, composed of two pentamers of five dimers.

The enzyme catalyses GTP + H2O = 7,8-dihydroneopterin 3'-triphosphate + formate + H(+). The protein operates within cofactor biosynthesis; 7,8-dihydroneopterin triphosphate biosynthesis; 7,8-dihydroneopterin triphosphate from GTP: step 1/1. In Yersinia pseudotuberculosis serotype O:1b (strain IP 31758), this protein is GTP cyclohydrolase 1.